Consider the following 205-residue polypeptide: Putative epidermin response regulator (205 aa).

The segment at residues 103–200 (KYIKYVNDDF…ERKLGYKILI (98 aa)) is a DNA-binding region (ompR/PhoB-type).

To the C-terminus of E.coli phosphate regulon transcriptional regulatory protein PhoB.

The polypeptide is Putative epidermin response regulator (epiQ) (Staphylococcus epidermidis).